Here is a 172-residue protein sequence, read N- to C-terminus: Ribosome maturation factor RimM (172 aa).

In terms of domain architecture, PRC barrel spans 96–168; that stretch reads EGEFYYHQII…RVDVELMEGL (73 aa).

It belongs to the RimM family. Binds ribosomal protein uS19.

It is found in the cytoplasm. Functionally, an accessory protein needed during the final step in the assembly of 30S ribosomal subunit, possibly for assembly of the head region. Essential for efficient processing of 16S rRNA. May be needed both before and after RbfA during the maturation of 16S rRNA. It has affinity for free ribosomal 30S subunits but not for 70S ribosomes. In Streptococcus pyogenes serotype M6 (strain ATCC BAA-946 / MGAS10394), this protein is Ribosome maturation factor RimM.